A 528-amino-acid polypeptide reads, in one-letter code: Proteinaceous RNase P 2 (528 aa).

A compositionally biased stretch (basic and acidic residues) spans 1–16 (MAASDQHRSRRHDESS). Residues 1–28 (MAASDQHRSRRHDESSSRPNKKKKVSRN) are disordered. PPR repeat units follow at residues 29–64 (PETN…EVRL), 72–107 (LLYL…GISP), 108–142 (NEAS…GGVS), and 145–179 (RLRT…GIAL). The 237-residue stretch at 275-511 (VSSTGRCLSC…NEESSRTWMC (237 aa)) folds into the PRORP domain. Positions 281 and 284 each coordinate Zn(2+). Mg(2+) is bound by residues Asp-343, Asp-421, Asp-422, and Asp-440. The Zn(2+) site is built by His-494 and Cys-511.

It belongs to the PPR family. P subfamily. As to quaternary structure, monomer; forms dimers in crystallo but monomers in solution. Requires Mg(2+) as cofactor.

The protein localises to the nucleus. The enzyme catalyses Endonucleolytic cleavage of RNA, removing 5'-extranucleotides from tRNA precursor.. Endonuclease RNase P responsible for the 5' maturation of tRNA precursors. Preferentially binds precursor tRNAs containing short 5' leaders and 3' trailers. Also involved in the maturation of mRNA and small nucleolar RNA (snoRNA). In Arabidopsis thaliana (Mouse-ear cress), this protein is Proteinaceous RNase P 2 (PRORP2).